Reading from the N-terminus, the 327-residue chain is Urease accessory protein UreD (327 aa).

The protein belongs to the UreD family. In terms of assembly, ureD, UreF and UreG form a complex that acts as a GTP-hydrolysis-dependent molecular chaperone, activating the urease apoprotein by helping to assemble the nickel containing metallocenter of UreC. The UreE protein probably delivers the nickel.

Its subcellular location is the cytoplasm. Required for maturation of urease via the functional incorporation of the urease nickel metallocenter. This is Urease accessory protein UreD from Yersinia enterocolitica serotype O:8 / biotype 1B (strain NCTC 13174 / 8081).